A 797-amino-acid chain; its full sequence is Calcium-transporting ATPase CtpE (797 aa).

3 consecutive transmembrane segments (helical) span residues 55-75, 215-235, and 254-274; these read LLLI…LLII, ILQF…YTQL, and VPMV…VGVV. Asp-301 serves as the catalytic 4-aspartylphosphate intermediate. Residues Asp-301, Thr-303, and Asp-536 each coordinate Mg(2+). Helical transmembrane passes span 601 to 621, 633 to 653, 667 to 687, 703 to 723, 729 to 749, and 764 to 784; these read TVYS…AIPL, IHVT…LSLA, VMTS…VTYL, ASTA…AVIA, WRLA…SLPL, and TSIA…MWWI.

It belongs to the cation transport ATPase (P-type) (TC 3.A.3) family.

Its subcellular location is the cell membrane. It catalyses the reaction Ca(2+)(in) + ATP + H2O = Ca(2+)(out) + ADP + phosphate + H(+). Functionally, P-type ATPase involved in specific uptake of calcium. The chain is Calcium-transporting ATPase CtpE (ctpE) from Mycobacterium bovis (strain ATCC BAA-935 / AF2122/97).